The following is a 205-amino-acid chain: ATP-dependent Clp protease proteolytic subunit (205 aa).

Ser-109 acts as the Nucleophile in catalysis. Residue His-134 is part of the active site.

The protein belongs to the peptidase S14 family. As to quaternary structure, fourteen ClpP subunits assemble into 2 heptameric rings which stack back to back to give a disk-like structure with a central cavity, resembling the structure of eukaryotic proteasomes.

It localises to the cytoplasm. The enzyme catalyses Hydrolysis of proteins to small peptides in the presence of ATP and magnesium. alpha-casein is the usual test substrate. In the absence of ATP, only oligopeptides shorter than five residues are hydrolyzed (such as succinyl-Leu-Tyr-|-NHMec, and Leu-Tyr-Leu-|-Tyr-Trp, in which cleavage of the -Tyr-|-Leu- and -Tyr-|-Trp bonds also occurs).. In terms of biological role, cleaves peptides in various proteins in a process that requires ATP hydrolysis. Has a chymotrypsin-like activity. Plays a major role in the degradation of misfolded proteins. The protein is ATP-dependent Clp protease proteolytic subunit of Baumannia cicadellinicola subsp. Homalodisca coagulata.